The sequence spans 252 residues: ATP synthase subunit a (252 aa).

Transmembrane regions (helical) follow at residues 33-53 (GQVF…AFVA), 92-112 (VPFV…GALV), 130-150 (DINT…YAGL), 196-216 (LVVS…VMVL), and 217-237 (GLFT…TYIG).

The protein belongs to the ATPase A chain family. In terms of assembly, F-type ATPases have 2 components, CF(1) - the catalytic core - and CF(0) - the membrane proton channel. CF(1) has five subunits: alpha(3), beta(3), gamma(1), delta(1), epsilon(1). CF(0) has four main subunits: a, b, b' and c.

The protein localises to the cellular thylakoid membrane. In terms of biological role, key component of the proton channel; it plays a direct role in the translocation of protons across the membrane. In Thermosynechococcus vestitus (strain NIES-2133 / IAM M-273 / BP-1), this protein is ATP synthase subunit a.